The following is a 112-amino-acid chain: Prothymosin alpha-B (112 aa).

The interval 1–112 is disordered; the sequence is MSDTAVDASV…TKKQKTDEDD (112 aa). Positions 9-35 are enriched in basic and acidic residues; it reads SVEKSTKDLKAKEKEVVEEAENGKDKP. Composition is skewed to acidic residues over residues 41 to 83 and 92 to 101; these read ENEE…DEVE and EDDEDDDDDV. Basic and acidic residues predominate over residues 102-112; it reads ETKKQKTDEDD.

It belongs to the pro/parathymosin family.

The protein resides in the nucleus. This is Prothymosin alpha-B (ptma-b) from Xenopus laevis (African clawed frog).